The sequence spans 373 residues: Septin homolog spn3 (373 aa).

Residues 10–286 (KGIPLNLMVV…ETYRTEKLST (277 aa)) form the Septin-type G domain. Residues 20-27 (GDVGLGRT) form a G1 motif region. Residue 20–27 (GDVGLGRT) coordinates GTP. The interval 79–82 (DTPH) is G3 motif. The tract at residues 161–164 (AKAD) is G4 motif. GTP is bound by residues 162 to 170 (KADSLTAQE) and Arg-235. Ser-303 is modified (phosphoserine). Residues 311–357 (EDRLRAIELSVQKEIEEKRRQLLAREEALRALEEKLAASTAAMANAS) adopt a coiled-coil conformation.

It belongs to the TRAFAC class TrmE-Era-EngA-EngB-Septin-like GTPase superfamily. Septin GTPase family. In terms of assembly, component of the septin complex composed of two copies of each spn1, spn2, spn3 and spn4.

The protein resides in the cytoplasm. It localises to the cell cortex. Plays a role in the cell cycle. Involved in a late stage of septum formation leading to the separation of the daughter cells. The protein is Septin homolog spn3 (spn3) of Schizosaccharomyces pombe (strain 972 / ATCC 24843) (Fission yeast).